The primary structure comprises 497 residues: Low affinity K(+) transporter 1 (497 aa).

Residues Met1–Lys29 are Extracellular-facing. Residues Thr30–Val50 form a helical membrane-spanning segment. The Cytoplasmic segment spans residues Ser51–Lys80. The helical transmembrane segment at Trp81–Gly101 threads the bilayer. At Met102–Ser216 the chain is on the extracellular side. The helical transmembrane segment at Leu217 to Ile237 threads the bilayer. Residues Cys238–Thr497 are Cytoplasmic-facing. Ser291 and Ser319 each carry phosphoserine. The tract at residues Glu420–Tyr469 is disordered. Positions Pro429–Arg444 are enriched in low complexity. Polar residues predominate over residues Gln451–Asn465.

Belongs to the KCH1 low affinity K(+) transporter family.

It is found in the vacuole membrane. Its subcellular location is the cell membrane. The catalysed reaction is K(+)(in) = K(+)(out). Its function is as follows. Low affinity potassium transporter that, with PRM6/KCH2, participates in high-affinity Ca(2+) influx system (HACS) activation during the response to mating pheromone. Directly promotes K(+) influx and HACS may electrochemically respond to this K(+) influx. KCH1 and KCH2 act at the apex of the calcium signaling pathway that is used for survival during prolonged exposures to mating pheromones. The polypeptide is Low affinity K(+) transporter 1 (Saccharomyces cerevisiae (strain ATCC 204508 / S288c) (Baker's yeast)).